Here is a 925-residue protein sequence, read N- to C-terminus: Translation initiation factor IF-2 (925 aa).

Disordered stretches follow at residues glycine 52 to proline 84 and alanine 98 to leucine 326. The span at alanine 57 to alanine 68 shows a compositional bias: low complexity. The span at alanine 69–proline 84 shows a compositional bias: basic and acidic residues. The span at alanine 98–serine 138 shows a compositional bias: low complexity. 2 stretches are compositionally biased toward pro residues: residues alanine 139–lysine 169 and proline 193–proline 207. Residues arginine 236–glycine 296 show a composition bias toward gly residues. Over residues arginine 300–lysine 309 the composition is skewed to basic residues. In terms of domain architecture, tr-type G spans threonine 421–leucine 592. A G1 region spans residues glycine 430–threonine 437. Glycine 430–threonine 437 is a GTP binding site. The segment at glycine 455 to histidine 459 is G2. The tract at residues aspartate 480–glycine 483 is G3. GTP contacts are provided by residues aspartate 480–histidine 484 and asparagine 534–aspartate 537. The interval asparagine 534 to aspartate 537 is G4. Positions serine 570–lysine 572 are G5.

Belongs to the TRAFAC class translation factor GTPase superfamily. Classic translation factor GTPase family. IF-2 subfamily.

The protein resides in the cytoplasm. One of the essential components for the initiation of protein synthesis. Protects formylmethionyl-tRNA from spontaneous hydrolysis and promotes its binding to the 30S ribosomal subunits. Also involved in the hydrolysis of GTP during the formation of the 70S ribosomal complex. The polypeptide is Translation initiation factor IF-2 (Mycolicibacterium paratuberculosis (strain ATCC BAA-968 / K-10) (Mycobacterium paratuberculosis)).